Here is a 622-residue protein sequence, read N- to C-terminus: MNKPLIHILPPQLANQIAAGEVVERPASVVKELVENSLDAGANQIQIDIEKGGAQLIRIRDNGCGIGKQDLALALARHATSKISSLEDLEMILSLGFRGEALASISSVSRLTLTSRPAGQAEAWQAYAQGREMEVEIQPASHPVGTTIEVANLFFNTPARRKFLRTDKTEFTHIDEVVRRIALAKPNIGFTLTHNGKTVRQYRKVQDNSVEQQQRRVAAICGDDFIQNAIHIDWQHGDLHLHGWIGLPNISRPQNDLCYSYVNGRMMRDKTINHAIRQAYEATDMPEGNYPAFVVFLDIDPSQVDVNVHPAKHEVRFHQGRLVHDFILQGVQTALQGQAEIDLTHQVNEPLPSYQRNTNRMAAGGNSFLASQQAVEFTENFAKPTASHMPNYSPRTSGVSKSAQKWYGELVSQPQNQSDNIQDLIEPKANFAPVIFAQEIDEAEPKPTQVVSAAIGHWQPLAIVQNQALLLKAEQQFYLLSLEKLARLRFQTQLTKGESQALLIPLNLSLDEQQTQRWQTLKTPLAELGFAISEKTWQGQIRLSVTQVPRLLREQNLQQILLSLFASQAVDLTEFFAKFAPIPTAYSLAEAVNWLAETEQTAKSELEKLKVAVDFSAFLARC.

It belongs to the DNA mismatch repair MutL/HexB family.

This protein is involved in the repair of mismatches in DNA. It is required for dam-dependent methyl-directed DNA mismatch repair. May act as a 'molecular matchmaker', a protein that promotes the formation of a stable complex between two or more DNA-binding proteins in an ATP-dependent manner without itself being part of a final effector complex. In Actinobacillus pleuropneumoniae serotype 3 (strain JL03), this protein is DNA mismatch repair protein MutL.